Consider the following 787-residue polypeptide: ER degradation-enhancing alpha-mannosidase-like protein 1 (787 aa).

An N-terminal signal peptide occupies residues methionine 1–serine 22. N-linked (GlcNAc...) asparagine glycosylation is found at asparagine 479, asparagine 609, asparagine 670, asparagine 693, and asparagine 756.

It belongs to the glycosyl hydrolase 47 family.

The protein resides in the endoplasmic reticulum lumen. Its function is as follows. Alpha-mannosidase-like protein involved in endoplasmic reticulum-associated degradation (ERAD). Delivers misfolded glycoproteins to proteasomes. It lacks mannosidase activity. This Schizosaccharomyces pombe (strain 972 / ATCC 24843) (Fission yeast) protein is ER degradation-enhancing alpha-mannosidase-like protein 1 (mnl1).